The following is a 428-amino-acid chain: Adenylosuccinate synthetase (428 aa).

Residues 12–18 and 40–42 each bind GTP; these read GDEGKGK and GHT. The Proton acceptor role is filled by Asp-13. Positions 13 and 40 each coordinate Mg(2+). IMP contacts are provided by residues 13–16, 38–41, Thr-130, Arg-144, Gln-225, Thr-240, and Arg-304; these read DEGK and NAGH. Catalysis depends on His-41, which acts as the Proton donor. 300–306 lines the substrate pocket; that stretch reads VTTGRAR. GTP contacts are provided by residues Arg-306, 332–334, and 414–416; these read KID and SVG.

The protein belongs to the adenylosuccinate synthetase family. Homodimer. Mg(2+) serves as cofactor.

It is found in the cytoplasm. The catalysed reaction is IMP + L-aspartate + GTP = N(6)-(1,2-dicarboxyethyl)-AMP + GDP + phosphate + 2 H(+). It participates in purine metabolism; AMP biosynthesis via de novo pathway; AMP from IMP: step 1/2. In terms of biological role, plays an important role in the de novo pathway of purine nucleotide biosynthesis. Catalyzes the first committed step in the biosynthesis of AMP from IMP. The sequence is that of Adenylosuccinate synthetase from Clostridium kluyveri (strain ATCC 8527 / DSM 555 / NBRC 12016 / NCIMB 10680 / K1).